The following is a 179-amino-acid chain: Crossover junction endodeoxyribonuclease RuvC (179 aa).

Residues aspartate 7 and glutamate 67 contribute to the active site. Residues aspartate 7 and glutamate 67 each coordinate Mn(2+). The short motif at 68–74 is the DNA-binding loop element; it reads DQILRRQ. Active-site residues include histidine 139 and aspartate 142. Histidine 139 lines the Mn(2+) pocket.

This sequence belongs to the RuvC family. As to quaternary structure, homodimer which binds Holliday junction (HJ) DNA. The HJ becomes 2-fold symmetrical on binding to RuvC with unstacked arms; it has a different conformation from HJ DNA in complex with RuvA. In the full resolvosome a probable DNA-RuvA(4)-RuvB(12)-RuvC(2) complex forms which resolves the HJ. Requires Mn(2+) as cofactor.

It localises to the cytoplasm. It catalyses the reaction Endonucleolytic cleavage at a junction such as a reciprocal single-stranded crossover between two homologous DNA duplexes (Holliday junction).. Its function is as follows. The RuvA-RuvB-RuvC complex processes Holliday junction (HJ) DNA during genetic recombination and DNA repair. Endonuclease that resolves HJ intermediates. Cleaves cruciform DNA by making single-stranded nicks across the HJ at symmetrical positions within the homologous arms, probably yielding a 5'-phosphate and a 3'-hydroxyl group; requires a central core of homology in the junction. The consensus cleavage sequence is 5'-(G/C)TC(C/G)-3' (a different site than E.coli); cleavage occurs on the 3'-side of the TC dinucleotide at the point of strand exchange. Also resolves nicked HJ intermediates, replication forks and Y-junction DNA in vitro. HJ branch migration catalyzed by RuvA-RuvB allows RuvC to scan DNA until it finds its consensus sequence, where it cleaves and resolves the cruciform DNA. Functionally, binds HJ DNA independently of homologous core or consensus sequence; Mn(2+) is not essential for binding but improves it, while &gt;1.0 mM Mg(2+) inhibit binding. Also binds Y-junction DNA less well. Requires a homologous core to cleave DNA. Another study shows divalent cations (Mn(2+), Mg(2+) and Ca(2+), tested up to 5.0 mM) improve DNA binding considerably over binding in their absence. The protein is Crossover junction endodeoxyribonuclease RuvC of Deinococcus radiodurans (strain ATCC 13939 / DSM 20539 / JCM 16871 / CCUG 27074 / LMG 4051 / NBRC 15346 / NCIMB 9279 / VKM B-1422 / R1).